A 463-amino-acid polypeptide reads, in one-letter code: Hydrolase pyiE (463 aa).

Serine 252 acts as the Nucleophile in catalysis. The tract at residues 350-373 (KSDGSRANGKKSHSPTDGGGVESD) is disordered.

This sequence belongs to the AB hydrolase superfamily. FUS2 hydrolase family. As to quaternary structure, homodimer.

Its pathway is mycotoxin biosynthesis. Hydrolyase; part of the gene cluster that mediates the biosynthesis of the mycotoxin pyrichalasin H, a tyrosine-derived cytochalasan that inhibits the growth of rice seedlings, but also inhibits lymphocyte capping and actin polymerization and alters cell morphology. Pyrichalasin H is indicated as the responsible agent for the genus-specific pathogenicity of M.grisea toward crabgrass. The first step in the pathway is catalyzed by the O-methyltransferase pyiA which methylates free tyrosine to generate the precursor O-methyltyrosine. The hybrid PKS-NRPS pyiS, assisted by the enoyl reductase pyiC, are responsible for fusion of the O-methyltyrosine precursor and the polyketide backbone. The polyketide synthase module (PKS) of pyiS is responsible for the synthesis of the polyketide backbone and the downstream nonribosomal peptide synthetase (NRPS) amidates the carboxyl end of the polyketide with the O-methyltyrosine precursor. As the NRPS A-domain demonstrates substrate tolerance, pyiS can also use phenylalanine, tyrosine and even para-chlorophenylalanine as amino acid precursor, which leads to the production of novel cytochalasans, including halogenated cytochalasans. Because pyiS lacks a designated enoylreductase (ER) domain, the required activity is provided the enoyl reductase pyiC. Reduction by the hydrolyase pyiE leads to 1,5-dihydropyrrolone, which is substrate for dehydration and intra-molecular Diels-Alder cyclization by the Diels-Alderase pyiF to yield the required isoindolone-fused macrocycle. The tailoring cytochrome P450 monooxygenases piyD and piyG catalyze the hydroxylation at C-18 and C-7, respectivily, whereas the short-chain dehydrogenase/reductase pyiH reduces the carbonyl at C-21 in preparation for the transfer of an acetyl group by the acetyltransferase pyiB. These 3 reactions whose order is not clear yet, lead to the production of O-methylpyrichalasin J, a deacetylated pyrichalasin H. Finally, pyiB to converts O-methylpyrichalasin J into the final product pyrichalasin H via acetylation of C-21. The sequence is that of Hydrolase pyiE from Pyricularia grisea (Crabgrass-specific blast fungus).